Reading from the N-terminus, the 274-residue chain is Large ribosomal subunit protein uL2cz/uL2cy (274 aa).

Disordered stretches follow at residues 1 to 25 and 224 to 274; these read MAIHLYKTSTPSTRNGAVDSQVKSN and NPVD…RRSK.

It belongs to the universal ribosomal protein uL2 family. Part of the 50S ribosomal subunit.

The protein localises to the plastid. It is found in the chloroplast. The sequence is that of Large ribosomal subunit protein uL2cz/uL2cy (rpl2-A) from Aethionema cordifolium (Lebanon stonecress).